Reading from the N-terminus, the 409-residue chain is Homoserine O-succinyltransferase (409 aa).

Residues 43 to 380 (NAIVVCHALN…PHGHDAFLLD (338 aa)) form the AB hydrolase-1 domain. Ser-149 (nucleophile) is an active-site residue. Arg-219 contributes to the substrate binding site. The segment at 244-268 (TLPAARGSLPPEGTDPTRGGPASDR) is disordered. Catalysis depends on residues Asp-341 and His-374. Asp-375 lines the substrate pocket.

This sequence belongs to the AB hydrolase superfamily. MetX family. Homodimer.

The protein resides in the cytoplasm. It catalyses the reaction L-homoserine + succinyl-CoA = O-succinyl-L-homoserine + CoA. The protein operates within amino-acid biosynthesis; L-methionine biosynthesis via de novo pathway; O-succinyl-L-homoserine from L-homoserine: step 1/1. Functionally, transfers a succinyl group from succinyl-CoA to L-homoserine, forming succinyl-L-homoserine. The polypeptide is Homoserine O-succinyltransferase (Comamonas testosteroni (strain DSM 14576 / KF-1) (Pseudomonas testosteroni)).